Here is a 248-residue protein sequence, read N- to C-terminus: 3-deoxy-manno-octulosonate cytidylyltransferase (248 aa).

It belongs to the KdsB family.

The protein localises to the cytoplasm. The enzyme catalyses 3-deoxy-alpha-D-manno-oct-2-ulosonate + CTP = CMP-3-deoxy-beta-D-manno-octulosonate + diphosphate. It functions in the pathway nucleotide-sugar biosynthesis; CMP-3-deoxy-D-manno-octulosonate biosynthesis; CMP-3-deoxy-D-manno-octulosonate from 3-deoxy-D-manno-octulosonate and CTP: step 1/1. It participates in bacterial outer membrane biogenesis; lipopolysaccharide biosynthesis. Functionally, activates KDO (a required 8-carbon sugar) for incorporation into bacterial lipopolysaccharide in Gram-negative bacteria. In Salmonella paratyphi A (strain ATCC 9150 / SARB42), this protein is 3-deoxy-manno-octulosonate cytidylyltransferase.